Consider the following 576-residue polypeptide: RING finger and SPRY domain-containing protein 1 (576 aa).

An N-terminal signal peptide occupies residues 1–16 (MIVFGWAVFLASRSLG). Phosphoserine is present on serine 50. The disordered stretch occupies residues 50–99 (SGTDDSVDTQQQQAENSAVPTADTRSQPRDPVRPPRRGRGPHEPRRKKQN). Residues 57–68 (DTQQQQAENSAV) show a composition bias toward polar residues. The span at 83-97 (PPRRGRGPHEPRRKK) shows a compositional bias: basic residues. The B30.2/SPRY domain maps to 300-483 (LFLKEGRQLT…CEFNFGAKPF (184 aa)). N-linked (GlcNAc...) asparagine glycosylation is present at asparagine 314. Residues 527–562 (CSLCCDEVADTQLKPCGHSDLCMDCALQLETCPLCR) form an RING-type zinc finger.

Its subcellular location is the secreted. The chain is RING finger and SPRY domain-containing protein 1 (RSPRY1) from Homo sapiens (Human).